A 185-amino-acid chain; its full sequence is Small ribosomal subunit protein uS5c (185 aa).

In terms of domain architecture, S5 DRBM spans Phe26–Ile89.

It belongs to the universal ribosomal protein uS5 family. As to quaternary structure, part of the 30S ribosomal subunit. Contacts protein S4.

It localises to the plastid. The protein resides in the chloroplast. Its function is as follows. With S4 and S12 plays an important role in translational accuracy. This is Small ribosomal subunit protein uS5c (rps5) from Trieres chinensis (Marine centric diatom).